The following is a 393-amino-acid chain: PxcA-like protein (393 aa).

4 helical membrane passes run 173-193, 271-291, 306-326, and 354-374; these read FLIV…NLVF, IVNL…IIVF, FLAL…DMFV, and VYIF…LLIF.

This sequence belongs to the CemA family. PxcL subfamily.

It is found in the cell inner membrane. Together with PxcA, contributes to transient H(+) uptake following dark to light transition. Required for H(+) influx to activate the Calvin-Benson-Bassham cycle. May also be involved in CO(2) transport. In Synechocystis sp. (strain ATCC 27184 / PCC 6803 / Kazusa), this protein is PxcA-like protein.